The primary structure comprises 81 residues: Sulfur carrier protein TusA (81 aa).

Cysteine 19 serves as the catalytic Cysteine persulfide intermediate.

Belongs to the sulfur carrier protein TusA family. As to quaternary structure, interacts with IscS.

It is found in the cytoplasm. Its pathway is tRNA modification. Functionally, sulfur carrier protein involved in sulfur trafficking in the cell. Part of a sulfur-relay system required for 2-thiolation during synthesis of 2-thiouridine of the modified wobble base 5-methylaminomethyl-2-thiouridine (mnm(5)s(2)U) in tRNA. Interacts with IscS and stimulates its cysteine desulfurase activity. Accepts an activated sulfur from IscS, which is then transferred to TusD, and thus determines the direction of sulfur flow from IscS to 2-thiouridine formation. Also appears to be involved in sulfur transfer for the biosynthesis of molybdopterin. The polypeptide is Sulfur carrier protein TusA (Salmonella choleraesuis (strain SC-B67)).